The chain runs to 478 residues: Violaxanthin de-epoxidase, chloroplastic (478 aa).

A coiled-coil region spans residues 388–453 (LVERLEKKVE…RELSKEEMDV (66 aa)).

It belongs to the calycin superfamily. Lipocalin family.

It localises to the plastid. The protein resides in the chloroplast thylakoid membrane. The catalysed reaction is all-trans-violaxanthin + 2 L-ascorbate = all-trans-zeaxanthin + 2 L-dehydroascorbate + 2 H2O. Its function is as follows. Part of the xanthophyll (or violaxanthin) cycle for controlling the concentration of zeaxanthin in chloroplasts. Catalyzes the two-step mono de-epoxidation reaction. Stereospecific for all-trans xanthophylls. Zeaxanthin induces the dissipation of excitation energy in the chlorophyll of the light-harvesting protein complex of photosystem II. The chain is Violaxanthin de-epoxidase, chloroplastic (VDE1) from Nicotiana tabacum (Common tobacco).